A 388-amino-acid polypeptide reads, in one-letter code: Ferrochelatase (388 aa).

The Fe cation site is built by His197 and Glu278.

This sequence belongs to the ferrochelatase family.

The protein resides in the cytoplasm. It carries out the reaction heme b + 2 H(+) = protoporphyrin IX + Fe(2+). The protein operates within porphyrin-containing compound metabolism; protoheme biosynthesis; protoheme from protoporphyrin-IX: step 1/1. In terms of biological role, catalyzes the ferrous insertion into protoporphyrin IX. The chain is Ferrochelatase from Thermosynechococcus vestitus (strain NIES-2133 / IAM M-273 / BP-1).